The following is a 356-amino-acid chain: Photosystem II protein D1 (356 aa).

3 consecutive transmembrane segments (helical) span residues 29–46 (YVGW…TATT), 118–133 (HFLI…QWEL), and 142–156 (WICV…AATA). Position 118 (His-118) interacts with chlorophyll a. Tyr-126 contributes to the pheophytin a binding site. Residues Asp-170 and Glu-189 each coordinate [CaMn4O5] cluster. Residues 197 to 218 (FHMLGVAGVFGGSLFSAMHGSL) form a helical membrane-spanning segment. Position 198 (His-198) interacts with chlorophyll a. A quinone contacts are provided by residues His-215 and 264–265 (SF). His-215 is a binding site for Fe cation. Residue His-272 participates in Fe cation binding. Residues 274–288 (FLGAWPVIGIWFTAM) form a helical membrane-spanning segment. Positions 332, 333, 342, and 344 each coordinate [CaMn4O5] cluster. Residues 345–356 (SAEPVSAPVING) constitute a propeptide that is removed on maturation.

It belongs to the reaction center PufL/M/PsbA/D family. PSII is composed of 1 copy each of membrane proteins PsbA, PsbB, PsbC, PsbD, PsbE, PsbF, PsbH, PsbI, PsbJ, PsbK, PsbL, PsbM, PsbT, PsbX, PsbY, PsbZ, Psb30/Ycf12, peripheral proteins PsbO, CyanoQ (PsbQ), PsbU, PsbV and a large number of cofactors. It forms dimeric complexes. The cofactor is The D1/D2 heterodimer binds P680, chlorophylls that are the primary electron donor of PSII, and subsequent electron acceptors. It shares a non-heme iron and each subunit binds pheophytin, quinone, additional chlorophylls, carotenoids and lipids. D1 provides most of the ligands for the Mn4-Ca-O5 cluster of the oxygen-evolving complex (OEC). There is also a Cl(-1) ion associated with D1 and D2, which is required for oxygen evolution. The PSII complex binds additional chlorophylls, carotenoids and specific lipids.. Tyr-161 forms a radical intermediate that is referred to as redox-active TyrZ, YZ or Y-Z. Post-translationally, C-terminally processed by CtpA; processing is essential to allow assembly of the oxygen-evolving complex and thus photosynthetic growth.

The protein resides in the cellular thylakoid membrane. The catalysed reaction is 2 a plastoquinone + 4 hnu + 2 H2O = 2 a plastoquinol + O2. In terms of biological role, photosystem II (PSII) is a light-driven water:plastoquinone oxidoreductase that uses light energy to abstract electrons from H(2)O, generating O(2) and a proton gradient subsequently used for ATP formation. It consists of a core antenna complex that captures photons, and an electron transfer chain that converts photonic excitation into a charge separation. The D1/D2 (PsbA/PsbD) reaction center heterodimer binds P680, the primary electron donor of PSII as well as several subsequent electron acceptors. This is Photosystem II protein D1 from Crocosphaera subtropica (strain ATCC 51142 / BH68) (Cyanothece sp. (strain ATCC 51142)).